Consider the following 153-residue polypeptide: SKP1-like protein 5 (153 aa).

The interval 90–153 (MMAANYLNIQ…IREENQWAFQ (64 aa)) is interaction with the F-box domain of F-box proteins.

Belongs to the SKP1 family. In terms of assembly, part of a SCF (SKP1-cullin-F-box) protein ligase complex. Interacts with PP2A13. As to expression, restricted to inflorescences, especially in the inflorescence meristem (IM).

Its subcellular location is the nucleus. Its pathway is protein modification; protein ubiquitination. Its function is as follows. Involved in ubiquitination and subsequent proteasomal degradation of target proteins. Together with CUL1, RBX1 and a F-box protein, it forms a SCF E3 ubiquitin ligase complex. The functional specificity of this complex depends on the type of F-box protein. In the SCF complex, it serves as an adapter that links the F-box protein to CUL1. In Arabidopsis thaliana (Mouse-ear cress), this protein is SKP1-like protein 5 (ASK5).